A 519-amino-acid polypeptide reads, in one-letter code: Pleckstrin homology domain-containing family A member 8 (519 aa).

The PH domain occupies 1 to 93 (MEGVLYKWTN…WLVALGSAKA (93 aa)). A Phosphothreonine modification is found at T139. Residue S145 is modified to Phosphoserine. T153 is subject to Phosphothreonine. The segment at 310 to 519 (TFFSTMNTSF…VHGLESDEVV (210 aa)) is glycolipid transfer protein homology domain.

Homodimer. Interacts with ARF1; the interaction together with phosphatidylinositol 4-phosphate binding is required for FAPP2 GlcCer transfer ability. Expressed in kidney cell lines.

It is found in the golgi apparatus. The protein localises to the trans-Golgi network membrane. It localises to the membrane. Functionally, cargo transport protein that is required for apical transport from the Golgi complex. Transports AQP2 from the trans-Golgi network (TGN) to sites of AQP2 phosphorylation. Mediates the non-vesicular transport of glucosylceramide (GlcCer) from the trans-Golgi network (TGN) to the plasma membrane and plays a pivotal role in the synthesis of complex glycosphingolipids. Binding of both phosphatidylinositol 4-phosphate (PIP) and ARF1 are essential for the GlcCer transfer ability. Also required for primary cilium formation, possibly by being involved in the transport of raft lipids to the apical membrane, and for membrane tubulation. In Homo sapiens (Human), this protein is Pleckstrin homology domain-containing family A member 8 (PLEKHA8).